A 393-amino-acid chain; its full sequence is S-adenosylmethionine synthase 4 (393 aa).

Glutamate 9 provides a ligand contact to Mg(2+). Histidine 15 provides a ligand contact to ATP. Glutamate 43 is a K(+) binding site. L-methionine is bound by residues glutamate 56 and glutamine 99. Residues 167 to 169 (DGK), 235 to 238 (SGRF), aspartate 246, 252 to 253 (RK), alanine 269, lysine 273, and lysine 277 contribute to the ATP site. Aspartate 246 provides a ligand contact to L-methionine. Lysine 277 is a binding site for L-methionine.

Belongs to the AdoMet synthase family. In terms of assembly, homotetramer. It depends on Mn(2+) as a cofactor. Requires Mg(2+) as cofactor. Co(2+) serves as cofactor. K(+) is required as a cofactor. As to expression, detected in trichomes (at the protein level).

The protein localises to the cytoplasm. The enzyme catalyses L-methionine + ATP + H2O = S-adenosyl-L-methionine + phosphate + diphosphate. The protein operates within amino-acid biosynthesis; S-adenosyl-L-methionine biosynthesis; S-adenosyl-L-methionine from L-methionine: step 1/1. Catalyzes the formation of S-adenosylmethionine from methionine and ATP. The reaction comprises two steps that are both catalyzed by the same enzyme: formation of S-adenosylmethionine (AdoMet) and triphosphate, and subsequent hydrolysis of the triphosphate. The sequence is that of S-adenosylmethionine synthase 4 (METK4) from Arabidopsis thaliana (Mouse-ear cress).